A 395-amino-acid chain; its full sequence is Bone morphogenetic protein 2 (395 aa).

A signal peptide spans 1 to 23; that stretch reads MVAGTRCLLALLLPQVLLGGAAG. The propeptide at 24–281 is cleaved by PCSK5; that stretch reads LIPELGRRKF…GHPLHRREKR (258 aa). Phosphoserine is present on Ser-86. Asn-134 and Asn-199 each carry an N-linked (GlcNAc...) asparagine glycan. The segment at 270–292 is disordered; it reads GKGHPLHRREKRQAKHKQRKRLK. Residues 273 to 292 are compositionally biased toward basic residues; it reads HPLHRREKRQAKHKQRKRLK. Intrachain disulfides connect Cys-295/Cys-360, Cys-324/Cys-392, and Cys-328/Cys-394. N-linked (GlcNAc...) asparagine glycosylation occurs at Asn-337.

It belongs to the TGF-beta family. In terms of assembly, homodimer; disulfide-linked. Interacts with SOSTDC1. Interacts with GREM2, RGMA, RGMB and RGMC. Interacts with ASPN. Interacts with MAFP5. Interacts with FBN1 (via N-terminal domain) and FBN2. Interacts with type I receptor BMPR1A. Interacts with type II receptor BMPR2. Interacts with SCUBE3. Interacts with TNFAIP6 (primarily via Link domain); this interaction is inhibited by hyaluronan. Interacts with ERFE. Interacts with BMPR1A/ALK3; the interaction may induce HAMP expression. Forms heterodimers with BMP6 in vitro; the heterodimer then binds to its receptor BMPR1A /ALK3 and may induce HAMP expression. Interacts with TGFBR3.

It localises to the secreted. In terms of biological role, growth factor of the TGF-beta superfamily that plays essential roles in many developmental processes, including cardiogenesis, neurogenesis, and osteogenesis. Induces cartilage and bone formation. Initiates the canonical BMP signaling cascade by associating with type I receptor BMPR1A and type II receptor BMPR2. Once all three components are bound together in a complex at the cell surface, BMPR2 phosphorylates and activates BMPR1A. In turn, BMPR1A propagates signal by phosphorylating SMAD1/5/8 that travel to the nucleus and act as activators and repressors of transcription of target genes. Also acts to promote expression of HAMP, via the interaction with its receptor BMPR1A/ALK3. Can also signal through non-canonical pathways such as ERK/MAP kinase signaling cascade that regulates osteoblast differentiation. Also stimulates the differentiation of myoblasts into osteoblasts via the EIF2AK3-EIF2A-ATF4 pathway by stimulating EIF2A phosphorylation which leads to increased expression of ATF4 which plays a central role in osteoblast differentiation. Acts as a positive regulator of odontoblast differentiation during mesenchymal tooth germ formation, expression is repressed during the bell stage by MSX1-mediated inhibition of CTNNB1 signaling. This Oryctolagus cuniculus (Rabbit) protein is Bone morphogenetic protein 2 (BMP2).